Consider the following 161-residue polypeptide: Tick receptor for ospA (161 aa).

Interacts with ospA protein from B.burgdorferi. Glycosylated. Specifically expressed in gut. Localizes predominantly in the intercellular spaces and luminal surface of the gut. In the gut, it localizes along tight junctions. Not expressed in salivary gland or hemolymph.

Its subcellular location is the cell membrane. Functionally, serves as a receptor for ospA protein of B.burgdorferi, the Lyme disease agent. Required for spirochetal colonization. Essential for pathogen adherence to the vector. The polypeptide is Tick receptor for ospA (TROSPA) (Ixodes scapularis (Black-legged tick)).